The primary structure comprises 467 residues: UDP-N-acetylmuramate--L-alanine ligase (467 aa).

112–118 (GTHGKTT) is an ATP binding site.

The protein belongs to the MurCDEF family.

Its subcellular location is the cytoplasm. The enzyme catalyses UDP-N-acetyl-alpha-D-muramate + L-alanine + ATP = UDP-N-acetyl-alpha-D-muramoyl-L-alanine + ADP + phosphate + H(+). The protein operates within cell wall biogenesis; peptidoglycan biosynthesis. Its function is as follows. Cell wall formation. The chain is UDP-N-acetylmuramate--L-alanine ligase from Paraburkholderia phytofirmans (strain DSM 17436 / LMG 22146 / PsJN) (Burkholderia phytofirmans).